The primary structure comprises 113 residues: Translation initiation factor IF-1, chloroplastic (113 aa).

The 76-residue stretch at 8-83 (REKKNPREAK…SKGRIIYRLP (76 aa)) folds into the S1-like domain. Positions 86-113 (DSKRIEDSKDSEDLKDSEDLKDTKDSKD) are disordered.

The protein belongs to the IF-1 family. Component of the 30S ribosomal translation pre-initiation complex which assembles on the 30S ribosome in the order IF-2 and IF-3, IF-1 and N-formylmethionyl-tRNA(fMet); mRNA recruitment can occur at any time during PIC assembly.

The protein localises to the plastid. Its subcellular location is the chloroplast. In terms of biological role, one of the essential components for the initiation of protein synthesis. Stabilizes the binding of IF-2 and IF-3 on the 30S subunit to which N-formylmethionyl-tRNA(fMet) subsequently binds. Helps modulate mRNA selection, yielding the 30S pre-initiation complex (PIC). Upon addition of the 50S ribosomal subunit IF-1, IF-2 and IF-3 are released leaving the mature 70S translation initiation complex. This is Translation initiation factor IF-1, chloroplastic from Hordeum vulgare (Barley).